Consider the following 135-residue polypeptide: Protein PsiE homolog (135 aa).

Transmembrane regions (helical) follow at residues 20–40 (VGLLLLAAILIVFLVKETIHL), 54–74 (YLLIEGIVIYFLYFEFIALIV), 82–102 (HFPLRYFIYIGITAIIRLIIV), and 107–127 (PIDTLIYSAAILLLVVTLYLA).

This sequence belongs to the PsiE family.

It localises to the cell inner membrane. This chain is Protein PsiE homolog, found in Serratia proteamaculans (strain 568).